Consider the following 156-residue polypeptide: ATP synthase subunit b (156 aa).

A helical membrane pass occupies residues 7–29 (LFAQMVVFLVLAWFTMKFVWPPL).

The protein belongs to the ATPase B chain family. In terms of assembly, F-type ATPases have 2 components, F(1) - the catalytic core - and F(0) - the membrane proton channel. F(1) has five subunits: alpha(3), beta(3), gamma(1), delta(1), epsilon(1). F(0) has three main subunits: a(1), b(2) and c(10-14). The alpha and beta chains form an alternating ring which encloses part of the gamma chain. F(1) is attached to F(0) by a central stalk formed by the gamma and epsilon chains, while a peripheral stalk is formed by the delta and b chains.

It is found in the cell inner membrane. F(1)F(0) ATP synthase produces ATP from ADP in the presence of a proton or sodium gradient. F-type ATPases consist of two structural domains, F(1) containing the extramembraneous catalytic core and F(0) containing the membrane proton channel, linked together by a central stalk and a peripheral stalk. During catalysis, ATP synthesis in the catalytic domain of F(1) is coupled via a rotary mechanism of the central stalk subunits to proton translocation. Functionally, component of the F(0) channel, it forms part of the peripheral stalk, linking F(1) to F(0). This is ATP synthase subunit b from Burkholderia lata (strain ATCC 17760 / DSM 23089 / LMG 22485 / NCIMB 9086 / R18194 / 383).